The primary structure comprises 48 residues: Cuticle protein 10 (48 aa).

In Limulus polyphemus (Atlantic horseshoe crab), this protein is Cuticle protein 10.